A 188-amino-acid polypeptide reads, in one-letter code: MSVVFVTGNAGKLRETNHILAPTGIELTSHKLDLEETQGTIEEVSIAKAKAAAKILNKPVLVEDTALGFAALKGLPGVYIKWFLDSLGHEGLNKMLAGFEDKSATAWCTFAYCGGPDEDVLLFQGTCEGTIVPPRGENNFGWNAVFEPKGYTETFAEMSEETKNAISHRFKALEKLKVFLAEKAEQSK.

ITP is bound at residue 7–12 (TGNAGK). Glutamate 36 is a Mg(2+) binding site. ITP-binding positions include lysine 48, 64 to 65 (DT), lysine 81, 140 to 143 (FGWN), lysine 163, and 168 to 169 (HR).

The protein belongs to the HAM1 NTPase family. In terms of assembly, homodimer. Requires Mg(2+) as cofactor. It depends on Mn(2+) as a cofactor.

It localises to the cytoplasm. Its subcellular location is the nucleus. It carries out the reaction ITP + H2O = IMP + diphosphate + H(+). The catalysed reaction is dITP + H2O = dIMP + diphosphate + H(+). The enzyme catalyses XTP + H2O = XMP + diphosphate + H(+). Functionally, pyrophosphatase that hydrolyzes non-canonical purine nucleotides such as inosine triphosphate (ITP), deoxyinosine triphosphate (dITP) or xanthosine 5'-triphosphate (XTP) to their respective monophosphate derivatives. The enzyme does not distinguish between the deoxy- and ribose forms. Probably excludes non-canonical purines from RNA and DNA precursor pools, thus preventing their incorporation into RNA and DNA and avoiding chromosomal lesions. The polypeptide is Inosine triphosphate pyrophosphatase (Yarrowia lipolytica (strain CLIB 122 / E 150) (Yeast)).